A 423-amino-acid chain; its full sequence is COP9 signalosome complex subunit 3 (423 aa).

The 169-residue stretch at 197-365 (NFERALYFYE…GMVCFHDNPE (169 aa)) folds into the PCI domain. A disordered region spans residues 402 to 423 (QFVQKSMGSQEDDSGTKPSSYS).

The protein belongs to the CSN3 family. Component of the CSN complex, probably composed of COPS1, COPS2, COPS3, COPS4, COPS5, COPS6, COPS7, COPS8 and COPS9.

Its subcellular location is the cytoplasm. The protein localises to the nucleus. Its function is as follows. Component of the COP9 signalosome complex (CSN), a complex involved in various cellular and developmental processes. The CSN complex is an essential regulator of the ubiquitin (Ubl) conjugation pathway by mediating the deneddylation of the cullin subunits of E3 ligase complexes, leading to modify the Ubl ligase activity. In Gallus gallus (Chicken), this protein is COP9 signalosome complex subunit 3 (COPS3).